The following is a 616-amino-acid chain: Dihydroxy-acid dehydratase (616 aa).

Aspartate 81 serves as a coordination point for Mg(2+). Cysteine 122 serves as a coordination point for [2Fe-2S] cluster. The Mg(2+) site is built by aspartate 123 and lysine 124. At lysine 124 the chain carries N6-carboxylysine. Position 195 (cysteine 195) interacts with [2Fe-2S] cluster. Glutamate 491 provides a ligand contact to Mg(2+). The Proton acceptor role is filled by serine 517.

It belongs to the IlvD/Edd family. Homodimer. Requires [2Fe-2S] cluster as cofactor. Mg(2+) serves as cofactor.

It catalyses the reaction (2R)-2,3-dihydroxy-3-methylbutanoate = 3-methyl-2-oxobutanoate + H2O. The catalysed reaction is (2R,3R)-2,3-dihydroxy-3-methylpentanoate = (S)-3-methyl-2-oxopentanoate + H2O. Its pathway is amino-acid biosynthesis; L-isoleucine biosynthesis; L-isoleucine from 2-oxobutanoate: step 3/4. The protein operates within amino-acid biosynthesis; L-valine biosynthesis; L-valine from pyruvate: step 3/4. In terms of biological role, functions in the biosynthesis of branched-chain amino acids. Catalyzes the dehydration of (2R,3R)-2,3-dihydroxy-3-methylpentanoate (2,3-dihydroxy-3-methylvalerate) into 2-oxo-3-methylpentanoate (2-oxo-3-methylvalerate) and of (2R)-2,3-dihydroxy-3-methylbutanoate (2,3-dihydroxyisovalerate) into 2-oxo-3-methylbutanoate (2-oxoisovalerate), the penultimate precursor to L-isoleucine and L-valine, respectively. The polypeptide is Dihydroxy-acid dehydratase (Shewanella loihica (strain ATCC BAA-1088 / PV-4)).